Consider the following 76-residue polypeptide: Omega-conotoxin-like TxO5 (76 aa).

Residues 1–22 (MKLTCMVIVAVLFLTAWTFVTA) form the signal peptide. The propeptide occupies 23–50 (ITSNGLENLFPNAHHEMKNPEASKLNKR). 3 disulfides stabilise this stretch: Cys51-Cys66, Cys58-Cys70, and Cys65-Cys75.

Belongs to the conotoxin O1 superfamily. As to expression, expressed by the venom duct.

Its subcellular location is the secreted. Its function is as follows. Omega-conotoxins act at presynaptic membranes, they bind and block voltage-gated calcium channels (Cav). The polypeptide is Omega-conotoxin-like TxO5 (TXO5) (Conus textile (Cloth-of-gold cone)).